The following is a 502-amino-acid chain: Probable cytosol aminopeptidase (502 aa).

2 residues coordinate Mn(2+): K269 and D274. Residue K281 is part of the active site. Mn(2+) contacts are provided by D292, D351, and E353. Residue R355 is part of the active site.

It belongs to the peptidase M17 family. Mn(2+) serves as cofactor.

Its subcellular location is the cytoplasm. It carries out the reaction Release of an N-terminal amino acid, Xaa-|-Yaa-, in which Xaa is preferably Leu, but may be other amino acids including Pro although not Arg or Lys, and Yaa may be Pro. Amino acid amides and methyl esters are also readily hydrolyzed, but rates on arylamides are exceedingly low.. It catalyses the reaction Release of an N-terminal amino acid, preferentially leucine, but not glutamic or aspartic acids.. Presumably involved in the processing and regular turnover of intracellular proteins. Catalyzes the removal of unsubstituted N-terminal amino acids from various peptides. This is Probable cytosol aminopeptidase from Aliivibrio fischeri (strain MJ11) (Vibrio fischeri).